The following is a 601-amino-acid chain: Glutathione-regulated potassium-efflux system protein KefB (601 aa).

13 helical membrane-spanning segments follow: residues 4–24, 29–49, 55–75, 87–107, 111–131, 152–172, 177–197, 207–227, 230–250, 262–282, 284–304, 324–344, and 356–376; these read ADLLTAGVLFLFAAVAAVPLA, IGAVLGYLLAGIAIGPWGLGF, EILHFSELGVVFLMFIIGLEL, IFGVGAAQVLLSAAVLAGLLM, FLWQAAVVGGIGLAMSSTAMA, VLLFQDLAVIPALALVPLLAG, HFDWFKVAMKVLAFAVMLIGG, FIAASGVREVFTAATLLLVLS, LFMDALGLSMALGTFIAGVLL, AIDPFKGLLLGLFFISVGMSL, LGVLYTHLLWVAASVVILVAI, MQFASVLSQGGEFAFVLFSTA, and ALLLVTVTLSMMTTPLLMKGI. Residues 400–519 form the RCK N-terminal domain; that stretch reads KPQVIVVGFG…AGVTQFSRET (120 aa).

This sequence belongs to the monovalent cation:proton antiporter 2 (CPA2) transporter (TC 2.A.37) family. KefB subfamily. In terms of assembly, interacts with the regulatory subunit KefG.

Its subcellular location is the cell inner membrane. Functionally, pore-forming subunit of a potassium efflux system that confers protection against electrophiles. Catalyzes K(+)/H(+) antiport. The sequence is that of Glutathione-regulated potassium-efflux system protein KefB from Salmonella schwarzengrund (strain CVM19633).